The primary structure comprises 174 residues: U-stichotoxin-Hau2a (174 aa).

The N-terminal stretch at 1 to 18 is a signal peptide; the sequence is MKPIFIVALLFSTCLVNA. Residues 19–33 constitute a propeptide that is removed on maturation; it reads KPSINDADIKREPEP. Residue P39 is modified to Hydroxyproline. 2 disulfide bridges follow: C40–C51 and C43–C58. Positions 61 to 67 are excised as a propeptide; it reads RKREPEP. Position 73 is a hydroxyproline (P73). Disulfide bonds link C74–C85 and C77–C92. A propeptide spanning residues 95–101 is cleaved from the precursor; sequence RKREPEP. P107 carries the post-translational modification Hydroxyproline. 2 cysteine pairs are disulfide-bonded: C108–C119 and C111–C126. A propeptide spanning residues 129-135 is cleaved from the precursor; the sequence is RKREPEP. P141 is modified (hydroxyproline). 2 disulfides stabilise this stretch: C142–C153 and C145–C160. A propeptide spanning residues 163–174 is cleaved from the precursor; sequence RKREPENQDLWS.

This sequence belongs to the sea anemone BBH family.

The protein resides in the secreted. It is found in the nematocyst. Neurotoxin that paralyzes freshwater crabs at high concentration. In Heteractis aurora (Banded sea anemone), this protein is U-stichotoxin-Hau2a.